The primary structure comprises 1095 residues: Putative disease resistance protein At4g11170 (1095 aa).

The TIR domain occupies W9–L173. E84 is a catalytic residue. In terms of domain architecture, NB-ARC spans D168–I454. LRR repeat units lie at residues C609 to R631, N632 to T654, K655 to L677, H679 to P701, S702 to T722, and N723 to W744.

The enzyme catalyses NAD(+) + H2O = ADP-D-ribose + nicotinamide + H(+). This is Putative disease resistance protein At4g11170 from Arabidopsis thaliana (Mouse-ear cress).